Consider the following 113-residue polypeptide: uncharacterized protein (113 aa).

A signal peptide spans 1–16; sequence MKCLVVLTALFGISTA. Residues 81 to 101 are compositionally biased toward gly residues; it reads GGNGGNGGGGNGGNNGNGNGN. A disordered region spans residues 81–103; the sequence is GGNGGNGGGGNGGNNGNGNGNNG.

In terms of tissue distribution, nacreous layer of shell (at protein level).

It localises to the secreted. This is an uncharacterized protein from Margaritifera margaritifera (Freshwater pearl mussel).